Consider the following 155-residue polypeptide: Ribosomal RNA large subunit methyltransferase H (155 aa).

Residues leucine 73, glycine 104, and 123-128 (LSPLTL) each bind S-adenosyl-L-methionine.

The protein belongs to the RNA methyltransferase RlmH family. In terms of assembly, homodimer.

Its subcellular location is the cytoplasm. The enzyme catalyses pseudouridine(1915) in 23S rRNA + S-adenosyl-L-methionine = N(3)-methylpseudouridine(1915) in 23S rRNA + S-adenosyl-L-homocysteine + H(+). Functionally, specifically methylates the pseudouridine at position 1915 (m3Psi1915) in 23S rRNA. This Pseudomonas putida (strain ATCC 700007 / DSM 6899 / JCM 31910 / BCRC 17059 / LMG 24140 / F1) protein is Ribosomal RNA large subunit methyltransferase H.